We begin with the raw amino-acid sequence, 478 residues long: Probable L-ascorbate peroxidase 8, chloroplastic (478 aa).

A compositionally biased stretch (low complexity) spans M1–A13. Disordered regions lie at residues M1–A31 and G44–R66. A chloroplast-targeting transit peptide spans M1 to R76. Positions S14 to P26 are enriched in pro residues. Residue H117 is the Proton acceptor of the active site. Residues A245 to Q276 form a disordered region. H246 is a binding site for heme b. K(+) is bound at residue T247. The segment covering S251–P270 has biased composition (basic and acidic residues). The K(+) site is built by T279 and D286. Positions A346–E417 are disordered. The span at P369–P381 shows a compositional bias: pro residues. The segment covering P394–A406 has biased composition (low complexity). Residues Y458–S478 traverse the membrane as a helical segment.

This sequence belongs to the peroxidase family. Ascorbate peroxidase subfamily. Interacts with SWEET11/OS8N3. The cofactor is heme b. Expressed in roots, leaves, stems and flowers. Expressed in leaves, shoots and panicles. Expressed at low levels in roots.

The protein localises to the plastid. It localises to the chloroplast thylakoid membrane. The enzyme catalyses L-ascorbate + H2O2 = L-dehydroascorbate + 2 H2O. Its function is as follows. Involved in defense response and tolerance to the bacterial pathogen Xanthomonas oryzae pv. oryzae (Xoo). Plays an important role in hydrogen peroxide removal during infection by Xoo. Involved in response to abiotic stress. Plays a role in hydrogen peroxide removal durings salt stress. In Oryza sativa subsp. japonica (Rice), this protein is Probable L-ascorbate peroxidase 8, chloroplastic.